An 863-amino-acid chain; its full sequence is DNA replication licensing factor MCM4 (863 aa).

Over residues 1–10 the composition is skewed to low complexity; the sequence is MSSPASTPSR. Disordered regions lie at residues 1 to 60 and 91 to 126; these read MSSP…VDLQ and TYGTPSSRVEGTPRSGVRGTPVRQRPDLGSAQKGLQ. Residue S2 is modified to N-acetylserine. S6 bears the Phosphoserine; by CDC7 mark. Residues T7 and T19 each carry the phosphothreonine modification. Phosphoserine occurs at positions 26, 31, 32, and 34. Phosphothreonine is present on T102. A Phosphoserine modification is found at S105. T110 carries the phosphothreonine modification. A phosphoserine mark is found at S120, S131, S142, and S145. K220 is subject to N6-acetyllysine. Residue K439 forms a Glycyl lysine isopeptide (Lys-Gly) (interchain with G-Cter in SUMO2) linkage. At K450 the chain carries N6-acetyllysine. Positions 458 to 667 constitute an MCM domain; sequence IYERLASALA…YDRRLAHHLV (210 aa). Y471, R497, K516, S517, N618, R643, R732, and E735 together coordinate ATP. Positions 642–645 match the Arginine finger motif; sequence SRFD. K798 is covalently cross-linked (Glycyl lysine isopeptide (Lys-Gly) (interchain with G-Cter in SUMO2)). K858 carries the post-translational modification N6-acetyllysine.

This sequence belongs to the MCM family. In terms of assembly, component of the MCM2-7 complex. The complex forms a toroidal hexameric ring with the proposed subunit order MCM2-MCM6-MCM4-MCM7-MCM3-MCM5. Component of the CMG helicase complex, a hexameric ring of related MCM2-7 subunits stabilized by CDC45 and the tetrameric GINS complex. Interacts with MCMBP. Post-translationally, sumoylated; SUMO2 modified in response to stress caused by inhibition of proteasome activity (in vitro).

It is found in the nucleus. The protein localises to the chromosome. It carries out the reaction ATP + H2O = ADP + phosphate + H(+). Functionally, acts as a component of the MCM2-7 complex (MCM complex) which is the replicative helicase essential for 'once per cell cycle' DNA replication initiation and elongation in eukaryotic cells. Core component of CDC45-MCM-GINS (CMG) helicase, the molecular machine that unwinds template DNA during replication, and around which the replisome is built. The active ATPase sites in the MCM2-7 ring are formed through the interaction surfaces of two neighboring subunits such that a critical structure of a conserved arginine finger motif is provided in trans relative to the ATP-binding site of the Walker A box of the adjacent subunit. The six ATPase active sites, however, are likely to contribute differentially to the complex helicase activity. The protein is DNA replication licensing factor MCM4 of Homo sapiens (Human).